The following is a 48-amino-acid chain: Lantibiotic salivaricin-A (48 aa).

A propeptide spanning residues 1-26 (MKNSKDILNNAIEEVSEKELMEVAGG) is cleaved from the precursor. 2 consecutive cross-links (beta-methyllanthionine (Thr-Cys)) follow at residues 35–40 (TITDDC) and 37–47 (TDDCPNSVFVC). A cross-link (lanthionine (Ser-Cys)) is located at residues 43-48 (SVFVCC).

Belongs to the type A lantibiotic family. Post-translationally, maturation of lantibiotics involves the enzymatic conversion of Thr, and Ser into dehydrated AA and the formation of thioether bonds with cysteine. This is followed by membrane translocation and cleavage of the modified precursor.

Its function is as follows. Lanthionine-containing peptide antibiotic (lantibiotic) active on Gram-positive bacteria. The bactericidal activity of lantibiotics is based on depolarization of energized bacterial cytoplasmic membranes, initiated by the formation of aqueous transmembrane pores. In Streptococcus salivarius, this protein is Lantibiotic salivaricin-A (salA).